We begin with the raw amino-acid sequence, 617 residues long: Protein fem-1 homolog C (617 aa).

ANK repeat units follow at residues 2–31, 40–70, 82–111, 115–144, 148–177, 181–210, and 213–242; these read DLKT…KDDV, NGAT…SVEI, EGAP…SVNN, TNST…DLEV, HGHT…DVNR, KGNT…RMEK, and YGMT…TSKN. TPR repeat units follow at residues 245–279 and 338–371; these read INAL…RHSD and SYYI…QQNN. 2 ANK repeats span residues 481–523 and 527–556; these read NNFS…DVNV and EQNS…HFDS.

Belongs to the fem-1 family. Component of a CRL2 E3 ubiquitin-protein ligase complex, also named ECS (Elongin BC-CUL2/5-SOCS-box protein) complex.

It functions in the pathway protein modification; protein ubiquitination. In terms of biological role, substrate-recognition component of a Cul2-RING (CRL2) E3 ubiquitin-protein ligase complex of the DesCEND (destruction via C-end degrons) pathway, which recognizes a C-degron located at the extreme C terminus of target proteins, leading to their ubiquitination and degradation. The C-degron recognized by the DesCEND pathway is usually a motif of less than ten residues and can be present in full-length proteins, truncated proteins or proteolytically cleaved forms. The CRL2(FEM1C) complex specifically recognizes proteins with an arginine at the C-terminus: recognizes and binds proteins ending with -Lys/Arg-Xaa-Arg and -Lys/Arg-Xaa-Xaa-Arg C-degrons, leading to their ubiquitination and degradation. The protein is Protein fem-1 homolog C of Xenopus laevis (African clawed frog).